The primary structure comprises 450 residues: tRNA modification GTPase MnmE (450 aa).

Residues Arg-23, Glu-80, and Arg-123 each coordinate (6S)-5-formyl-5,6,7,8-tetrahydrofolate. Residues 219–372 form the TrmE-type G domain; it reads GLHVVLAGKP…LRQRLLQLAG (154 aa). Asn-229 lines the K(+) pocket. GTP contacts are provided by residues 229-234, 248-254, 273-276, and 353-355; these read NVGKSS, TPIAGTT, DTAG, and SAR. Mg(2+) is bound at residue Ser-233. Thr-248, Ile-250, and Thr-253 together coordinate K(+). Thr-254 is a Mg(2+) binding site. Lys-450 serves as a coordination point for (6S)-5-formyl-5,6,7,8-tetrahydrofolate.

This sequence belongs to the TRAFAC class TrmE-Era-EngA-EngB-Septin-like GTPase superfamily. TrmE GTPase family. As to quaternary structure, homodimer. Heterotetramer of two MnmE and two MnmG subunits. The cofactor is K(+).

It is found in the cytoplasm. Functionally, exhibits a very high intrinsic GTPase hydrolysis rate. Involved in the addition of a carboxymethylaminomethyl (cmnm) group at the wobble position (U34) of certain tRNAs, forming tRNA-cmnm(5)s(2)U34. The chain is tRNA modification GTPase MnmE from Bordetella parapertussis (strain 12822 / ATCC BAA-587 / NCTC 13253).